Here is a 564-residue protein sequence, read N- to C-terminus: Phenylalanine--tRNA ligase beta subunit (564 aa).

One can recognise a B5 domain in the interval 286 to 362; it reads YFQNTLEVSV…IGRGLDSFKP (77 aa). Mg(2+)-binding residues include Asp340, Asp346, Glu349, and Glu350.

The protein belongs to the phenylalanyl-tRNA synthetase beta subunit family. Type 2 subfamily. In terms of assembly, tetramer of two alpha and two beta subunits. Requires Mg(2+) as cofactor.

Its subcellular location is the cytoplasm. The enzyme catalyses tRNA(Phe) + L-phenylalanine + ATP = L-phenylalanyl-tRNA(Phe) + AMP + diphosphate + H(+). The polypeptide is Phenylalanine--tRNA ligase beta subunit (Borrelia hermsii (strain HS1 / DAH)).